We begin with the raw amino-acid sequence, 730 residues long: Elongation factor 2 (730 aa).

The tr-type G domain maps to 19–260 (EKIRNIGIVA…MVIRFLPNPL (242 aa)). GTP is bound by residues 28-35 (AHIDHGKT), 94-98 (DTPGH), and 148-151 (NKVD). Diphthamide is present on His596.

This sequence belongs to the TRAFAC class translation factor GTPase superfamily. Classic translation factor GTPase family. EF-G/EF-2 subfamily.

It is found in the cytoplasm. In terms of biological role, catalyzes the GTP-dependent ribosomal translocation step during translation elongation. During this step, the ribosome changes from the pre-translocational (PRE) to the post-translocational (POST) state as the newly formed A-site-bound peptidyl-tRNA and P-site-bound deacylated tRNA move to the P and E sites, respectively. Catalyzes the coordinated movement of the two tRNA molecules, the mRNA and conformational changes in the ribosome. The polypeptide is Elongation factor 2 (fusA) (Methanosarcina thermophila).